A 103-amino-acid polypeptide reads, in one-letter code: Large ribosomal subunit protein bL21 (103 aa).

It belongs to the bacterial ribosomal protein bL21 family. As to quaternary structure, part of the 50S ribosomal subunit. Contacts protein L20.

In terms of biological role, this protein binds to 23S rRNA in the presence of protein L20. This chain is Large ribosomal subunit protein bL21, found in Ectopseudomonas mendocina (strain ymp) (Pseudomonas mendocina).